Consider the following 432-residue polypeptide: Adenylosuccinate synthetase (432 aa).

Residues glycine 12–lysine 18 and glycine 40–threonine 42 each bind GTP. Catalysis depends on aspartate 13, which acts as the Proton acceptor. Mg(2+)-binding residues include aspartate 13 and glycine 40. IMP-binding positions include aspartate 13 to lysine 16, asparagine 38 to histidine 41, threonine 132, arginine 146, glutamine 226, threonine 241, and arginine 305. Histidine 41 (proton donor) is an active-site residue. Valine 301–arginine 307 serves as a coordination point for substrate. GTP is bound by residues arginine 307, lysine 333–aspartate 335, and serine 415–serine 417.

The protein belongs to the adenylosuccinate synthetase family. As to quaternary structure, homodimer. It depends on Mg(2+) as a cofactor.

Its subcellular location is the cytoplasm. It catalyses the reaction IMP + L-aspartate + GTP = N(6)-(1,2-dicarboxyethyl)-AMP + GDP + phosphate + 2 H(+). It participates in purine metabolism; AMP biosynthesis via de novo pathway; AMP from IMP: step 1/2. Functionally, plays an important role in the de novo pathway of purine nucleotide biosynthesis. Catalyzes the first committed step in the biosynthesis of AMP from IMP. In Mesorhizobium japonicum (strain LMG 29417 / CECT 9101 / MAFF 303099) (Mesorhizobium loti (strain MAFF 303099)), this protein is Adenylosuccinate synthetase.